Consider the following 179-residue polypeptide: Ribosome-recycling factor (179 aa).

This sequence belongs to the RRF family.

Its subcellular location is the cytoplasm. In terms of biological role, responsible for the release of ribosomes from messenger RNA at the termination of protein biosynthesis. May increase the efficiency of translation by recycling ribosomes from one round of translation to another. In Chlamydia muridarum (strain MoPn / Nigg), this protein is Ribosome-recycling factor.